A 1219-amino-acid polypeptide reads, in one-letter code: DNA ligase 4 (1219 aa).

11 residues coordinate ATP: Glu-251, Lys-253, Arg-258, Arg-273, Glu-303, Phe-342, Glu-418, Lys-423, Arg-434, Lys-440, and Lys-442. Residue Lys-253 is the N6-AMP-lysine intermediate of the active site. Position 303 (Glu-303) interacts with Mg(2+). Glu-418 lines the Mg(2+) pocket. A disordered region spans residues 604–632 (NGTTQKQKESESTQDNPKVNKSSKRGEKK). 2 consecutive BRCT domains span residues 651–739 (GKTS…PKYF) and 807–909 (VYFY…VYTL). 2 disordered regions span residues 914–1126 (MEES…MDMK) and 1146–1197 (IPSQ…SDVV). The span at 932 to 960 (VASQGSAQTKEPASSKIAITSSRGRSNTR) shows a compositional bias: polar residues. Positions 1042-1051 (QRSRRGKKAA) are enriched in basic residues. Over residues 1056-1065 (DESDENDELD) the composition is skewed to acidic residues. Basic and acidic residues-rich tracts occupy residues 1084–1096 (VENE…DIAK) and 1117–1126 (RNAKTEMDMK). Over residues 1148 to 1159 (SQKTTETSNRTT) the composition is skewed to polar residues.

It belongs to the ATP-dependent DNA ligase family. As to quaternary structure, interacts with XRCC4 via its tandem BRCT domains. Interacts with POLL. The cofactor is Mg(2+). As to expression, widely expressed, with higher levels in young flowers and roots.

The protein localises to the nucleus. It catalyses the reaction ATP + (deoxyribonucleotide)n-3'-hydroxyl + 5'-phospho-(deoxyribonucleotide)m = (deoxyribonucleotide)n+m + AMP + diphosphate.. DNA ligase involved in DNA non-homologous end joining (NHEJ); required for double-strand break (DSB) repair. May be involved for T-DNA integration even if not absolutely required. Seems to be dispensable under normal growth conditions. The sequence is that of DNA ligase 4 (LIG4) from Arabidopsis thaliana (Mouse-ear cress).